The chain runs to 306 residues: Agmatinase (306 aa).

Mn(2+)-binding residues include histidine 126, aspartate 149, histidine 151, aspartate 153, aspartate 230, and aspartate 232.

The protein belongs to the arginase family. Agmatinase subfamily. Mn(2+) serves as cofactor.

The catalysed reaction is agmatine + H2O = urea + putrescine. The protein operates within amine and polyamine biosynthesis; putrescine biosynthesis via agmatine pathway; putrescine from agmatine: step 1/1. Its function is as follows. Catalyzes the formation of putrescine from agmatine. The chain is Agmatinase from Escherichia coli (strain K12 / DH10B).